The following is a 311-amino-acid chain: Aspartate carbamoyltransferase catalytic subunit (311 aa).

The carbamoyl phosphate site is built by R58 and T59. Position 86 (K86) interacts with L-aspartate. Carbamoyl phosphate contacts are provided by R108, H136, and Q139. L-aspartate contacts are provided by R169 and R224. The carbamoyl phosphate site is built by G265 and P266.

Belongs to the aspartate/ornithine carbamoyltransferase superfamily. ATCase family. As to quaternary structure, heterododecamer (2C3:3R2) of six catalytic PyrB chains organized as two trimers (C3), and six regulatory PyrI chains organized as three dimers (R2).

The enzyme catalyses carbamoyl phosphate + L-aspartate = N-carbamoyl-L-aspartate + phosphate + H(+). The protein operates within pyrimidine metabolism; UMP biosynthesis via de novo pathway; (S)-dihydroorotate from bicarbonate: step 2/3. Its function is as follows. Catalyzes the condensation of carbamoyl phosphate and aspartate to form carbamoyl aspartate and inorganic phosphate, the committed step in the de novo pyrimidine nucleotide biosynthesis pathway. The chain is Aspartate carbamoyltransferase catalytic subunit from Geotalea daltonii (strain DSM 22248 / JCM 15807 / FRC-32) (Geobacter daltonii).